A 237-amino-acid chain; its full sequence is UPF0502 protein HEAR1280 (237 aa).

Residues 1–13 are compositionally biased toward polar residues; that stretch reads MNTEVMHSTSTES. A disordered region spans residues 1–21; the sequence is MNTEVMHSTSTESDAQEKPQA.

This sequence belongs to the UPF0502 family.

This chain is UPF0502 protein HEAR1280, found in Herminiimonas arsenicoxydans.